Reading from the N-terminus, the 229-residue chain is 7-cyano-7-deazaguanine synthase (229 aa).

ATP is bound at residue 12–22; that stretch reads LSGGMDSCVCA. Zn(2+) is bound by residues cysteine 194, cysteine 202, cysteine 205, and cysteine 208.

It belongs to the QueC family. Zn(2+) serves as cofactor.

The enzyme catalyses 7-carboxy-7-deazaguanine + NH4(+) + ATP = 7-cyano-7-deazaguanine + ADP + phosphate + H2O + H(+). It functions in the pathway purine metabolism; 7-cyano-7-deazaguanine biosynthesis. In terms of biological role, catalyzes the ATP-dependent conversion of 7-carboxy-7-deazaguanine (CDG) to 7-cyano-7-deazaguanine (preQ(0)). This chain is 7-cyano-7-deazaguanine synthase, found in Acidobacterium capsulatum (strain ATCC 51196 / DSM 11244 / BCRC 80197 / JCM 7670 / NBRC 15755 / NCIMB 13165 / 161).